The following is an 85-amino-acid chain: Colicin-E6 immunity protein (85 aa).

The protein belongs to the cloacin immunity protein family.

Its function is as follows. This protein inhibits the 16S RNA hydrolyzing activity of colicin E6 by binding with high affinity to the C-terminal catalytic domain of E6. This protein is able to protect a cell, which harbors the plasmid ColE6 against colicin E6. This is Colicin-E6 immunity protein (imm) from Escherichia coli.